Here is a 126-residue protein sequence, read N- to C-terminus: Protein ApaG (126 aa).

Residues 2 to 126 (SALDDSIRVE…FRLALPGLLH (125 aa)) form the ApaG domain.

The polypeptide is Protein ApaG (Shewanella sp. (strain MR-7)).